We begin with the raw amino-acid sequence, 200 residues long: Large ribosomal subunit protein bL25 (200 aa).

Belongs to the bacterial ribosomal protein bL25 family. CTC subfamily. In terms of assembly, part of the 50S ribosomal subunit; part of the 5S rRNA/L5/L18/L25 subcomplex. Contacts the 5S rRNA. Binds to the 5S rRNA independently of L5 and L18.

Its function is as follows. This is one of the proteins that binds to the 5S RNA in the ribosome where it forms part of the central protuberance. This chain is Large ribosomal subunit protein bL25, found in Pseudomonas fluorescens (strain SBW25).